The following is a 146-amino-acid chain: UPF0178 protein OB0454 (146 aa).

This sequence belongs to the UPF0178 family.

In Oceanobacillus iheyensis (strain DSM 14371 / CIP 107618 / JCM 11309 / KCTC 3954 / HTE831), this protein is UPF0178 protein OB0454.